Here is a 324-residue protein sequence, read N- to C-terminus: tRNA uridine(34) hydroxylase (324 aa).

Residues asparagine 145–leucine 239 form the Rhodanese domain. Cysteine 199 acts as the Cysteine persulfide intermediate in catalysis.

This sequence belongs to the TrhO family.

It carries out the reaction uridine(34) in tRNA + AH2 + O2 = 5-hydroxyuridine(34) in tRNA + A + H2O. In terms of biological role, catalyzes oxygen-dependent 5-hydroxyuridine (ho5U) modification at position 34 in tRNAs. The sequence is that of tRNA uridine(34) hydroxylase from Buchnera aphidicola subsp. Acyrthosiphon pisum (strain APS) (Acyrthosiphon pisum symbiotic bacterium).